Reading from the N-terminus, the 451-residue chain is SH2 domain-containing protein 7 (451 aa).

The 92-residue stretch at 51–142 (WFHGFITRKQ…PFKEMLTAAC (92 aa)) folds into the SH2 domain. Disordered regions lie at residues 180 to 232 (KAAS…SLLE), 256 to 321 (LGTE…SDAM), and 408 to 436 (GTPE…THKP). Positions 221-232 (SPLPEKSSSLLE) are enriched in low complexity. Over residues 279–291 (EAQRRLSDGEQNR) the composition is skewed to basic and acidic residues. Over residues 306 to 316 (QGPTESPTSWG) the composition is skewed to polar residues. A compositionally biased stretch (basic and acidic residues) spans 426 to 436 (KSKETGRTHKP).

The sequence is that of SH2 domain-containing protein 7 (SH2D7) from Homo sapiens (Human).